The sequence spans 553 residues: Glutamyl-tRNA(Gln) amidotransferase subunit B, mitochondrial (553 aa).

The transit peptide at 1–18 (MAASTSGYSGVLFRLRKY) directs the protein to the mitochondrion.

This sequence belongs to the GatB/GatE family. GatB subfamily. In terms of assembly, subunit of the heterotrimeric GatCAB amidotransferase (AdT) complex, composed of A (qrsl1), B (gatb) and C (gatc) subunits.

It is found in the mitochondrion. It catalyses the reaction L-glutamyl-tRNA(Gln) + L-glutamine + ATP + H2O = L-glutaminyl-tRNA(Gln) + L-glutamate + ADP + phosphate + H(+). Its function is as follows. Allows the formation of correctly charged Gln-tRNA(Gln) through the transamidation of misacylated Glu-tRNA(Gln) in the mitochondria. The reaction takes place in the presence of glutamine and ATP through an activated gamma-phospho-Glu-tRNA(Gln). The sequence is that of Glutamyl-tRNA(Gln) amidotransferase subunit B, mitochondrial from Danio rerio (Zebrafish).